The chain runs to 438 residues: 3-phosphoshikimate 1-carboxyvinyltransferase (438 aa).

3-phosphoshikimate is bound by residues K21, S22, and R26. K21 is a phosphoenolpyruvate binding site. 2 residues coordinate phosphoenolpyruvate: G93 and R121. 3-phosphoshikimate is bound by residues S166, S167, Q168, S194, D324, and K351. A phosphoenolpyruvate-binding site is contributed by Q168. The active-site Proton acceptor is D324. 2 residues coordinate phosphoenolpyruvate: R355 and R395.

It belongs to the EPSP synthase family. In terms of assembly, monomer.

The protein resides in the cytoplasm. The enzyme catalyses 3-phosphoshikimate + phosphoenolpyruvate = 5-O-(1-carboxyvinyl)-3-phosphoshikimate + phosphate. It participates in metabolic intermediate biosynthesis; chorismate biosynthesis. In terms of biological role, catalyzes the transfer of the enolpyruvyl moiety of phosphoenolpyruvate (PEP) to the 5-hydroxyl of shikimate-3-phosphate (S3P) to produce enolpyruvyl shikimate-3-phosphate and inorganic phosphate. The chain is 3-phosphoshikimate 1-carboxyvinyltransferase from Methanobrevibacter smithii (strain ATCC 35061 / DSM 861 / OCM 144 / PS).